Consider the following 127-residue polypeptide: Small ribosomal subunit protein uS11 (127 aa).

Belongs to the universal ribosomal protein uS11 family. As to quaternary structure, part of the 30S ribosomal subunit. Interacts with proteins S7 and S18. Binds to IF-3.

In terms of biological role, located on the platform of the 30S subunit, it bridges several disparate RNA helices of the 16S rRNA. Forms part of the Shine-Dalgarno cleft in the 70S ribosome. The polypeptide is Small ribosomal subunit protein uS11 (Pelodictyon phaeoclathratiforme (strain DSM 5477 / BU-1)).